The chain runs to 243 residues: Aldehyde decarbonylase (243 aa).

Fe cation contacts are provided by glutamate 45, glutamate 73, histidine 76, glutamate 128, and histidine 160.

Belongs to the aldehyde decarbonylase family. Requires Binds 2 metal cations per subunit. The catalytic dinuclear metal-binding site could be either a di-iron or a manganese-iron cofactor. as cofactor.

It catalyses the reaction a long-chain fatty aldehyde + 2 NADPH + O2 + H(+) = a long-chain alkane + formate + 2 NADP(+) + H2O. Its function is as follows. Catalyzes the decarbonylation of fatty aldehydes to alkanes. Requires the presence of ferredoxin, ferredoxin reductase and NADPH for in vitro decarbonylase activity. Involved in the biosynthesis of alkanes, mainly heptadecane and pentadecane. In Prochlorococcus marinus (strain MIT 9313), this protein is Aldehyde decarbonylase.